The following is a 409-amino-acid chain: Formyl-CoA:oxalate CoA-transferase (409 aa).

Residues 17–18 (QS), 71–74 (LNTK), 95–97 (NFG), R103, and 135–138 (KAYE) contribute to the CoA site. D167 (nucleophile) is an active-site residue. A disordered region spans residues 221–245 (LAEYPNDDFGDEVPRSGNASGGGQP). Residue 242 to 244 (GGQ) participates in substrate binding.

This sequence belongs to the CoA-transferase III family. Frc subfamily. Homodimer.

It carries out the reaction formyl-CoA + oxalate = oxalyl-CoA + formate. The protein operates within metabolic intermediate degradation; oxalate degradation; CO(2) and formate from oxalate: step 1/2. In terms of biological role, involved in the catabolism of oxalate and in the adapatation to low pH via the induction of the oxalate-dependent acid tolerance response (ATR). Catalyzes the transfer of the CoA moiety from formyl-CoA to oxalate. The chain is Formyl-CoA:oxalate CoA-transferase from Streptomyces avermitilis (strain ATCC 31267 / DSM 46492 / JCM 5070 / NBRC 14893 / NCIMB 12804 / NRRL 8165 / MA-4680).